A 192-amino-acid chain; its full sequence is Acetolactate synthase small subunit (192 aa).

One can recognise an ACT domain in the interval 29-103 (IITVKVRNEM…DTLKVSDLTD (75 aa)).

It belongs to the acetolactate synthase small subunit family. As to quaternary structure, dimer of large and small chains.

It carries out the reaction 2 pyruvate + H(+) = (2S)-2-acetolactate + CO2. Its pathway is amino-acid biosynthesis; L-isoleucine biosynthesis; L-isoleucine from 2-oxobutanoate: step 1/4. It functions in the pathway amino-acid biosynthesis; L-valine biosynthesis; L-valine from pyruvate: step 1/4. The protein is Acetolactate synthase small subunit (ilvH) of Aquifex aeolicus (strain VF5).